The following is a 695-amino-acid chain: ATP-dependent zinc metalloprotease FTSH 2, chloroplastic (695 aa).

The N-terminal 47 residues, 1-47, are a transit peptide targeting the chloroplast; the sequence is MAASSACLVGNGLSVNTTTKQRLSKHFSGRQTSFSSVIRTSKVNVVK. The transit peptide at 48–82 directs the protein to the thylakoid; that stretch reads ASLDGKKKQEGRRDFLKILLGNAGVGLVASGKANA. Residues 83–167 lie on the Lumenal, thylakoid side of the membrane; sequence DEQGVSSSRM…AHNAQEDQGS (85 aa). The helical transmembrane segment at 168–188 threads the bilayer; that stretch reads VLFNLIGNLAFPALLIGGLFL. Residues 189-695 are Stromal-facing; the sequence is LSRRSGGGMG…PASAPTPAAV (507 aa). Position 267 to 274 (267 to 274) interacts with ATP; it reads GPPGTGKT. Histidine 488 lines the Zn(2+) pocket. Glutamate 489 is an active-site residue. 2 residues coordinate Zn(2+): histidine 492 and aspartate 566. Residues 673 to 695 form a disordered region; that stretch reads PPENRVPSSTTTTPASAPTPAAV. Low complexity predominate over residues 679-695; the sequence is PSSTTTTPASAPTPAAV.

This sequence in the N-terminal section; belongs to the AAA ATPase family. It in the C-terminal section; belongs to the peptidase M41 family. As to quaternary structure, interacts with CHIP and FTSH5. Heterohexamers with FTSH1, FTSH5 and FTSH8. May also form homooligomers. The cofactor is Zn(2+). In terms of processing, the FTSH2 precursor is ubiquitinated by CHIP in the cytoplasm. Expressed in cotyledons, cauline and rosette leaves, stems, sepals, flovers and siliques. Very low in roots.

The protein resides in the plastid. Its subcellular location is the chloroplast thylakoid membrane. Functionally, part of a complex that function as an ATP-dependent zinc metallopeptidase. Involved in the thylakoid formation and in the removal of damaged D1 in the photosystem II, preventing cell death under high-intensity light conditions, but not involved in thermotolerance. This is ATP-dependent zinc metalloprotease FTSH 2, chloroplastic (FTSH2) from Arabidopsis thaliana (Mouse-ear cress).